The chain runs to 474 residues: Phosphomannomutase (474 aa).

The active-site Phosphoserine intermediate is the Ser101. Residues Ser101, Asp242, Asp244, and Asp246 each contribute to the Mg(2+) site.

This sequence belongs to the phosphohexose mutase family. Mg(2+) is required as a cofactor.

The enzyme catalyses alpha-D-mannose 1-phosphate = D-mannose 6-phosphate. The chain is Phosphomannomutase (noeK) from Sinorhizobium fredii (strain NBRC 101917 / NGR234).